A 148-amino-acid polypeptide reads, in one-letter code: Putative FAD-linked sulfhydryl oxidase 096R (148 aa).

An ERV/ALR sulfhydryl oxidase domain is found at 1–103; that stretch reads MSIDPKLWGN…LAAKTVFQRY (103 aa). The cysteines at positions 48 and 51 are disulfide-linked. Residues 122 to 142 traverse the membrane as a helical segment; the sequence is WSPWLTTALAVILVVVVAGIG.

It belongs to the IIV-6 347L family. Requires FAD as cofactor.

Its subcellular location is the membrane. The catalysed reaction is 2 R'C(R)SH + O2 = R'C(R)S-S(R)CR' + H2O2. Its function is as follows. FAD-dependent sulfhydryl oxidase that catalyzes disulfide bond formation. The polypeptide is Putative FAD-linked sulfhydryl oxidase 096R (Aedes vexans (Inland floodwater mosquito)).